Reading from the N-terminus, the 224-residue chain is Acyl-protein thioesterase 1 (224 aa).

Active-site charge relay system residues include Ser116, Asp170, and His203.

The protein belongs to the AB hydrolase superfamily. AB hydrolase 2 family.

The protein localises to the cytoplasm. Its subcellular location is the nucleus. It catalyses the reaction S-hexadecanoyl-L-cysteinyl-[protein] + H2O = L-cysteinyl-[protein] + hexadecanoate + H(+). Its function is as follows. Hydrolyzes fatty acids from S-acylated cysteine residues in proteins with a strong preference for palmitoylated G-alpha proteins over other acyl substrates. Mediates the deacylation of G-alpha proteins such as GPA1 in vivo, but has weak or no activity toward palmitoylated Ras proteins. Has weak lysophospholipase activity in vitro; however such activity may not exist in vivo. This Schizosaccharomyces pombe (strain 972 / ATCC 24843) (Fission yeast) protein is Acyl-protein thioesterase 1.